Reading from the N-terminus, the 1647-residue chain is MAP kinase-activating death domain protein (1647 aa).

A uDENN domain is found at 14–268 (YLVIVGARHP…VPVSGQKRVD (255 aa)). Over residues 108-122 (EKGEGGAGSRGKEGT) the composition is skewed to basic and acidic residues. A disordered region spans residues 108 to 168 (EKGEGGAGSR…GKRRAKAGSR (61 aa)). A compositionally biased stretch (low complexity) spans 128–141 (SEEGGTESSESGSS). The span at 142-157 (LQPLSADSTPDVNQSP) shows a compositional bias: polar residues. A Phosphoserine modification is found at Ser156. The span at 158-167 (RGKRRAKAGS) shows a compositional bias: basic residues. A cDENN domain is found at 289-429 (RFTLVDFPLH…ESLELKKHLK (141 aa)). One can recognise a dDENN domain in the interval 431-565 (ALASMSLNTQ…LNPTNYAFQR (135 aa)). Disordered regions lie at residues 604 to 636 (ALSV…SSYS) and 678 to 842 (NQKE…STEG). Residues 615–630 (SEPTDDSGSDSMDYDD) are compositionally biased toward acidic residues. Phosphoserine is present on residues Ser689 and Ser692. Residues 689–699 (SENSQENPPLR) show a composition bias toward polar residues. Positions 700-712 (SSSSTTASSSPST) are enriched in low complexity. Basic and acidic residues predominate over residues 750 to 768 (NVDRRQAEIGEGSVRRRIY). The segment covering 790 to 804 (ESYTPRFSQHVSGNR) has biased composition (polar residues). Residues Ser813, Ser818, and Ser820 each carry the phosphoserine modification. The segment covering 827 to 840 (RASSPNSTVSNTST) has biased composition (low complexity). 5 positions are modified to phosphoserine: Ser858, Ser862, Ser916, Ser921, and Ser930. Disordered stretches follow at residues 913 to 941 (QKSS…SSEN), 1051 to 1110 (KEPD…DTRS), and 1146 to 1243 (VFDL…DSEI). Over residues 932–941 (QGRSSNSSEN) the composition is skewed to polar residues. Phosphoserine is present on Ser1059. Residues Thr1061 and Thr1066 each carry the phosphothreonine modification. Ser1110 carries the post-translational modification Phosphoserine. Composition is skewed to polar residues over residues 1158 to 1173 (QISA…SSQR), 1189 to 1207 (RSSS…SSGE), and 1234 to 1243 (SRGTLSDSEI). A Phosphothreonine modification is found at Thr1237. A phosphoserine mark is found at Ser1239 and Ser1270. One can recognise a Death domain in the interval 1340–1415 (GMDQGPQEMI…GLVYSQQINE (76 aa)).

This sequence belongs to the MADD family. In terms of assembly, interacts (via death domain) with TNFRSF1A (via death domain). Interacts with PIDD1. Interacts with YWHAZ. Interacts (via death domain) with KIF1B; links the motor KIF1B to Rab3-carrying vesicles in anterograde synaptic vesicle transport. Interacts with KIF1A. Interacts (via uDENN domain) with RAB3A, RAB3B, RAB3C and RAB3D; the GTP-bound form of the Rab proteins is preferred for interaction. In terms of tissue distribution, expressed in testis, ovary, brain and heart. Expressed in spleen, thymus, prostate, testis, ovary, small instestine and colon. Expressed in liver. As to expression, not detected in the brain, breast, kidney, lung, ovary, pancreas, testis, uterus, stomach and thyroid. Expressed in the brain, breast, kidney, lung, ovary, pancreas, testis, uterus, stomach and thyroid.

Its subcellular location is the cell membrane. It localises to the cytoplasm. The protein resides in the cell projection. The protein localises to the axon. In terms of biological role, guanyl-nucleotide exchange factor that regulates small GTPases of the Rab family. Converts GDP-bound inactive form of RAB27A and RAB27B to the GTP-bound active forms. Converts GDP-bound inactive form of RAB3A, RAB3C and RAB3D to the GTP-bound active forms, GTPases involved in synaptic vesicle exocytosis and vesicle secretion. Plays a role in synaptic vesicle formation and in vesicle trafficking at the neuromuscular junction. Involved in up-regulating a post-docking step of synaptic exocytosis in central synapses. Probably by binding to the motor proteins KIF1B and KIF1A, mediates motor-dependent transport of GTP-RAB3A-positive vesicles to the presynaptic nerve terminals. Plays a role in TNFA-mediated activation of the MAPK pathway, including ERK1/2. May link TNFRSF1A with MAP kinase activation. May be involved in the regulation of TNFA-induced apoptosis. In Homo sapiens (Human), this protein is MAP kinase-activating death domain protein.